The chain runs to 482 residues: 3-isopropylmalate dehydratase large subunit (482 aa).

The disordered stretch occupies residues 60 to 79 (ATPDHNVPTTRAERQGGLES). The [4Fe-4S] cluster site is built by Cys-353, Cys-414, and Cys-417.

This sequence belongs to the aconitase/IPM isomerase family. LeuC type 1 subfamily. As to quaternary structure, heterodimer of LeuC and LeuD. The cofactor is [4Fe-4S] cluster.

It catalyses the reaction (2R,3S)-3-isopropylmalate = (2S)-2-isopropylmalate. Its pathway is amino-acid biosynthesis; L-leucine biosynthesis; L-leucine from 3-methyl-2-oxobutanoate: step 2/4. Catalyzes the isomerization between 2-isopropylmalate and 3-isopropylmalate, via the formation of 2-isopropylmaleate. The protein is 3-isopropylmalate dehydratase large subunit of Xanthomonas euvesicatoria pv. vesicatoria (strain 85-10) (Xanthomonas campestris pv. vesicatoria).